Here is a 177-residue protein sequence, read N- to C-terminus: Small ribosomal subunit protein mS23 (177 aa).

Ala2 carries the N-acetylalanine modification. N6-succinyllysine is present on Lys83. Lys102 is modified (N6-acetyllysine). The disordered stretch occupies residues 145–177 (LQASSEGHEPQEDDDLAQRGQVKQEPETAPSPP).

The protein belongs to the mitochondrion-specific ribosomal protein mS23 family. Component of the mitochondrial ribosome small subunit (28S) which comprises a 12S rRNA and about 30 distinct proteins.

Its subcellular location is the mitochondrion. The polypeptide is Small ribosomal subunit protein mS23 (Mus musculus (Mouse)).